Reading from the N-terminus, the 313-residue chain is MNGVWIEVRVITSCEAIEPISGIFYGLNSQGVAVEDPNDLLTRDQGPLTWDFADINVLEHKGEFAVVKAYFSGDDDLEKIVSITKEKVKEIQEMGIDIGKGIVECDKIKEEDWANNWKKYYKPSNITDRIVVKPMWEEYLPKNEELVIELDPGMAFGTGTHETTRMCVKALEKYVEHDSTVFDVGCGSGILAIAAAKLGAKLALGVDLDPVAVESAKENVGLNDLDNIEILEGNLLDVIDGKADIVVANIIAEIICILTDDVSKALNKGGLFITSGIIHERVDMVTSKLDECGFEVMEVNKDGEWNCIVAKLK.

Threonine 164, glycine 185, aspartate 207, and asparagine 249 together coordinate S-adenosyl-L-methionine.

Belongs to the methyltransferase superfamily. PrmA family.

The protein localises to the cytoplasm. It carries out the reaction L-lysyl-[protein] + 3 S-adenosyl-L-methionine = N(6),N(6),N(6)-trimethyl-L-lysyl-[protein] + 3 S-adenosyl-L-homocysteine + 3 H(+). Methylates ribosomal protein L11. The chain is Ribosomal protein L11 methyltransferase from Clostridium botulinum (strain Alaska E43 / Type E3).